The primary structure comprises 277 residues: Formamidopyrimidine-DNA glycosylase (277 aa).

The active-site Schiff-base intermediate with DNA is Pro2. Glu3 acts as the Proton donor in catalysis. Lys60 (proton donor; for beta-elimination activity) is an active-site residue. Residues His94, Arg113, and Arg156 each contribute to the DNA site. Residues 241 to 275 form an FPG-type zinc finger; sequence KVYNREGLPCPHCGKPIQRIKVAGRSSYYCSSCQK. Arg265 acts as the Proton donor; for delta-elimination activity in catalysis.

This sequence belongs to the FPG family. As to quaternary structure, monomer. It depends on Zn(2+) as a cofactor.

The catalysed reaction is Hydrolysis of DNA containing ring-opened 7-methylguanine residues, releasing 2,6-diamino-4-hydroxy-5-(N-methyl)formamidopyrimidine.. The enzyme catalyses 2'-deoxyribonucleotide-(2'-deoxyribose 5'-phosphate)-2'-deoxyribonucleotide-DNA = a 3'-end 2'-deoxyribonucleotide-(2,3-dehydro-2,3-deoxyribose 5'-phosphate)-DNA + a 5'-end 5'-phospho-2'-deoxyribonucleoside-DNA + H(+). Involved in base excision repair of DNA damaged by oxidation or by mutagenic agents. Acts as a DNA glycosylase that recognizes and removes damaged bases. Has a preference for oxidized purines, such as 7,8-dihydro-8-oxoguanine (8-oxoG). Has AP (apurinic/apyrimidinic) lyase activity and introduces nicks in the DNA strand. Cleaves the DNA backbone by beta-delta elimination to generate a single-strand break at the site of the removed base with both 3'- and 5'-phosphates. The protein is Formamidopyrimidine-DNA glycosylase of Desulforamulus reducens (strain ATCC BAA-1160 / DSM 100696 / MI-1) (Desulfotomaculum reducens).